The sequence spans 488 residues: ATP synthase subunit beta (488 aa).

ATP is bound at residue 155 to 162; it reads GGAGVGKT. The segment at 467-488 is disordered; the sequence is GFAPDDQNTDADEKPAAQAAAN.

Belongs to the ATPase alpha/beta chains family. In terms of assembly, F-type ATPases have 2 components, CF(1) - the catalytic core - and CF(0) - the membrane proton channel. CF(1) has five subunits: alpha(3), beta(3), gamma(1), delta(1), epsilon(1). CF(0) has three main subunits: a(1), b(2) and c(9-12). The alpha and beta chains form an alternating ring which encloses part of the gamma chain. CF(1) is attached to CF(0) by a central stalk formed by the gamma and epsilon chains, while a peripheral stalk is formed by the delta and b chains.

The protein localises to the cell membrane. The enzyme catalyses ATP + H2O + 4 H(+)(in) = ADP + phosphate + 5 H(+)(out). In terms of biological role, produces ATP from ADP in the presence of a proton gradient across the membrane. The catalytic sites are hosted primarily by the beta subunits. This is ATP synthase subunit beta from Lacticaseibacillus casei (strain BL23) (Lactobacillus casei).